The sequence spans 166 residues: Ribosome-binding factor A (166 aa).

Residues V119–H166 are disordered. Residues E143–D154 show a composition bias toward acidic residues.

The protein belongs to the RbfA family. As to quaternary structure, monomer. Binds 30S ribosomal subunits, but not 50S ribosomal subunits or 70S ribosomes.

The protein resides in the cytoplasm. One of several proteins that assist in the late maturation steps of the functional core of the 30S ribosomal subunit. Associates with free 30S ribosomal subunits (but not with 30S subunits that are part of 70S ribosomes or polysomes). Required for efficient processing of 16S rRNA. May interact with the 5'-terminal helix region of 16S rRNA. The sequence is that of Ribosome-binding factor A from Clavibacter michiganensis subsp. michiganensis (strain NCPPB 382).